The sequence spans 98 residues: 10 kDa chaperonin (98 aa).

It belongs to the GroES chaperonin family. Forms stable complexes with CPN60 in the presence of ATP.

The protein localises to the cytoplasm. In terms of biological role, seems to function only as a co-chaperone, along with cpn60, and in certain cases is essential for the discharge of biologically active proteins from cpn60. The chain is 10 kDa chaperonin from Brassica napus (Rape).